Consider the following 67-residue polypeptide: uncharacterized protein (67 aa).

2 helical membrane-spanning segments follow: residues 10 to 30 (EFFI…ITMW) and 40 to 60 (LMVG…WMVF).

The protein belongs to the plectrovirus ORF10 family.

It is found in the host membrane. This is an uncharacterized protein from Spiroplasma citri (SpV1).